Reading from the N-terminus, the 342-residue chain is Isopentenyl-diphosphate delta-isomerase (342 aa).

11-12 (RK) is a binding site for substrate. FMN is bound by residues Ser68, 69–71 (SMT), Ser99, and Asn127. 99–101 (SMR) contributes to the substrate binding site. Residue Glu163 participates in Mg(2+) binding. FMN is bound by residues Lys194, Thr224, and 295-296 (AG).

It belongs to the IPP isomerase type 2 family. As to quaternary structure, homooctamer. Dimer of tetramers. The cofactor is FMN. NADPH is required as a cofactor. Requires Mg(2+) as cofactor.

The protein localises to the cytoplasm. The enzyme catalyses isopentenyl diphosphate = dimethylallyl diphosphate. Involved in the biosynthesis of isoprenoids. Catalyzes the 1,3-allylic rearrangement of the homoallylic substrate isopentenyl (IPP) to its allylic isomer, dimethylallyl diphosphate (DMAPP). This chain is Isopentenyl-diphosphate delta-isomerase, found in Rickettsia prowazekii (strain Madrid E).